Here is a 295-residue protein sequence, read N- to C-terminus: Glutamate 5-kinase (295 aa).

Residue K9 participates in ATP binding. S49, D136, and N148 together coordinate substrate. ATP contacts are provided by residues 168–169 (TD) and 210–216 (TGGMLTK).

Belongs to the glutamate 5-kinase family.

Its subcellular location is the cytoplasm. It carries out the reaction L-glutamate + ATP = L-glutamyl 5-phosphate + ADP. The protein operates within amino-acid biosynthesis; L-proline biosynthesis; L-glutamate 5-semialdehyde from L-glutamate: step 1/2. Catalyzes the transfer of a phosphate group to glutamate to form L-glutamate 5-phosphate. The chain is Glutamate 5-kinase from Neisseria gonorrhoeae (strain NCCP11945).